Here is a 472-residue protein sequence, read N- to C-terminus: Protein PIN-LIKES 1 (472 aa).

Topologically, residues 1-93 (MSLTQSAKLH…FYSMRMRLLD (93 aa)) are lumenal. A helical membrane pass occupies residues 94-114 (LFITSSIPVAKILLITGIGFY). The Cytoplasmic portion of the chain corresponds to 115 to 133 (LALDQVNILNHDARKQLNN). Residues 134 to 154 (IVFYVFSPSLVASSLSETITY) traverse the membrane as a helical segment. Residues 155-161 (ESMVKMW) are Lumenal-facing. A helical transmembrane segment spans residues 162–182 (FMPLNVLLTFIIGSFLGWIVI). Residues 183-193 (KITKPPSHLRG) are Cytoplasmic-facing. A helical membrane pass occupies residues 194–214 (IIVGCCAAGNLGNMPLIIIPA). Residues 215–231 (ICNEKGSPFGDPESCEK) are Lumenal-facing. Residues 232-252 (FGLGYIALSMAIGAIYIWTYV) traverse the membrane as a helical segment. At 253–309 (YNLMRMLANPAGETAINSTSSTMPLISPKVEVAEQVGTWGKVKQRVCSVAEKINLRT) the chain is on the cytoplasmic side. Residues 310–330 (IFAPSTIAALIALAVGLNPLL) form a helical membrane-spanning segment. The Lumenal segment spans residues 331–347 (RKLLVGNTAPLRVIEDS). The helical transmembrane segment at 348-368 (VSLLGDGAIPVLTLIVGGNLL) threads the bilayer. Topologically, residues 369–379 (NGLRGSGINKS) are cytoplasmic. A helical membrane pass occupies residues 380-400 (VIMGVVVVRYLLLPILGVFIV). Topologically, residues 401–413 (RGAHYLGLVTSEP) are lumenal. A helical transmembrane segment spans residues 414-434 (LYQFVLLLQYVVPPAMNLGTI). At 435-446 (TQLFGSGESECS) the chain is on the cytoplasmic side. The chain crosses the membrane as a helical span at residues 447 to 467 (VILFWSYALASVSLTVWPTFF). Topologically, residues 468 to 472 (MWLVA) are lumenal.

It belongs to the auxin efflux carrier (TC 2.A.69.2) family. As to expression, expressed in flowers.

It is found in the endoplasmic reticulum membrane. Involved in cellular auxin homeostasis by regulating auxin metabolism. Regulates intracellular auxin accumulation at the endoplasmic reticulum and thus auxin availability for nuclear auxin signaling. The chain is Protein PIN-LIKES 1 from Arabidopsis thaliana (Mouse-ear cress).